We begin with the raw amino-acid sequence, 531 residues long: Methyl-accepting chemotaxis protein McpN (531 aa).

The Cytoplasmic segment spans residues 1–24 (MNESVARVFDRILRGLGLKTLNAQ). The helical transmembrane segment at 25-45 (FLLSYALMFGLAACASVALYL) threads the bilayer. The Periplasmic portion of the chain corresponds to 46–174 (SMSISPETIN…LMSARADSVQ (129 aa)). A pilJ-type region spans residues 52-140 (ETINVAGAQR…AMLDQVAQPA (89 aa)). The N-box signature appears at 54-65 (INVAGAQRMLSQ). R61 contributes to the nitrate binding site. A helical membrane pass occupies residues 175–195 (HTQMWIAFGCLLAILVLVVLG). Residues 196–531 (RQFGLAPLMR…LRVVLGRFRT (336 aa)) are Cytoplasmic-facing. An HAMP domain is found at 201–254 (APLMRQLRGLEVALTEVGAANFTHALAAGHADNEIGRIVAGYERMRQDVSGLLA). Residues 259–495 (SAAETDKDVA…DIDRNITNVS (237 aa)) enclose the Methyl-accepting transducer domain.

The protein belongs to the methyl-accepting chemotaxis (MCP) protein family. In terms of assembly, ligand free ligand-binding domain (LBD) is present in a monomer-dimer equilibrium. Nitrate binding to the periplasmic LBD stabilizes the homodimer.

The protein localises to the cell inner membrane. In terms of biological role, chemotactic-signal transducers respond to changes in the concentration of attractants and repellents in the environment, transduce a signal from the outside to the inside of the cell, and facilitate sensory adaptation through the variation of the level of methylation. McpN is a chemoreceptor that recognizes specifically nitrate and mediates chemoattraction. Binds nitrate specifically and shows no affinity for other ligands such as nitrite. McpN-mediated taxis occurs only under nitrate starvation conditions. This is Methyl-accepting chemotaxis protein McpN from Pseudomonas aeruginosa (strain ATCC 15692 / DSM 22644 / CIP 104116 / JCM 14847 / LMG 12228 / 1C / PRS 101 / PAO1).